Here is a 295-residue protein sequence, read N- to C-terminus: Probable protein phosphatase 2C 6 (295 aa).

The 272-residue stretch at Gln23–Phe294 folds into the PPM-type phosphatase domain. Mn(2+) is bound by residues Asp57, Gly58, Asp237, and Asp285.

This sequence belongs to the PP2C family. The cofactor is Mg(2+). Mn(2+) is required as a cofactor.

The protein localises to the membrane. The enzyme catalyses O-phospho-L-seryl-[protein] + H2O = L-seryl-[protein] + phosphate. The catalysed reaction is O-phospho-L-threonyl-[protein] + H2O = L-threonyl-[protein] + phosphate. Enzyme with a broad specificity. This Paramecium tetraurelia protein is Probable protein phosphatase 2C 6.